The primary structure comprises 342 residues: Protein-ribulosamine 3-kinase, chloroplastic (342 aa).

Residues 1–46 (MANVALLSAASPSTSSAAPRLRHVARRRPSRRSACPRSAASRLSIM) constitute a chloroplast transit peptide. Residue 141–143 (EFI) participates in ATP binding. The active-site Proton acceptor is the Asp246.

The protein belongs to the fructosamine kinase family.

Its subcellular location is the plastid. The protein localises to the chloroplast. The enzyme catalyses N(6)-D-ribulosyl-L-lysyl-[protein] + ATP = N(6)-(3-O-phospho-D-ribulosyl)-L-lysyl-[protein] + ADP + H(+). It carries out the reaction N(6)-(D-erythrulosyl)-L-lysyl-[protein] + ATP = N(6)-(3-O-phospho-D-erythrulosyl)-L-lysyl-[protein] + ADP + H(+). In terms of biological role, initiates a process leading to the deglycation of proteins. Phosphorylates low-molecular-mass and protein-bound erythrulosamines and ribulosamines, but not fructosamines or psicosamines, on the third carbon of the sugar moiety. Protein-bound erythrulosamine 3-phosphates and ribulosamine 3-phosphates are unstable and decompose under physiological conditions. The chain is Protein-ribulosamine 3-kinase, chloroplastic from Oryza sativa subsp. indica (Rice).